A 347-amino-acid polypeptide reads, in one-letter code: MIKEYYGAETFILNKDFAYILVIGTTDVSLIPGLTIAGATPELTHFTPAADAEYVLLGKCKSINTIPVSPTGIPTPALLTRASLSFINPLKIVVNAGSRIVPKIPYIDLQGEPGKDIRKQALSMEKVNNIIENSIKLGEELSNEYELIMIGESIPAGTTTAMATLLALGYDAMDKVSSASPDNPKELKRKVVEEALRNLPTDPLQRLAKVSDPVLLGVAGTSLGFKGKILLAGGTQMTAAAAIINEFDKNKLKDITIGTTKWIVEDKFADMLSLAKQVGVKVLASMLDLSISAYEGIRAYEKGYVKEGVGAGGSAIMALVRGVSNNTLVRKIDELYGELVGSNNLHI.

This sequence belongs to the UPF0284 family.

The protein is UPF0284 protein M164_0030 of Saccharolobus islandicus (strain M.16.4 / Kamchatka #3) (Sulfolobus islandicus).